A 438-amino-acid polypeptide reads, in one-letter code: MEEIVVHGGQRLTGNVHIEGAKNAVLPILAASLLASSGQTHLSNVPVLSDVFTMNNVLKFLNTKIDFDEINKTIDIDASRQLSSEAPFQYVSKMRASIVVMGPLLARLGHAKVAMPGGCAIGSRPIDLHLKGLNALGAEIERHDGYVEATANQLHGAAIYLDFPSVGATQNIMMAATLADGITTMENVAREPEIVDLANYLNQMGAKVTGAGTETIRIEGVKAMHGCDHSIVQDRIEAGTFMVAAAVTQGNVLVEDAIAEHNKPLISKMREMGVTVTEEPAGIRVIGPEILKPTSVKTMPHPGFPTDMQPQMTILQLCAQGTSLLTETVFENRFMHLDELRRMNADFKVEGRSVIMYGPTDFNGAQVTATDLRAAAALVIAGLVSRGYTEVTNLKYLDRGYFNFHGKLAKLGAEIKRVDVPDGTVYALNPDFANEAAE.

Residue 22 to 23 (KN) participates in phosphoenolpyruvate binding. Arg-95 contacts UDP-N-acetyl-alpha-D-glucosamine. The active-site Proton donor is the Cys-119. Residue Cys-119 is modified to 2-(S-cysteinyl)pyruvic acid O-phosphothioketal. UDP-N-acetyl-alpha-D-glucosamine-binding positions include 124–128 (RPIDL), Asp-307, and Val-329.

This sequence belongs to the EPSP synthase family. MurA subfamily.

The protein localises to the cytoplasm. It carries out the reaction phosphoenolpyruvate + UDP-N-acetyl-alpha-D-glucosamine = UDP-N-acetyl-3-O-(1-carboxyvinyl)-alpha-D-glucosamine + phosphate. It participates in cell wall biogenesis; peptidoglycan biosynthesis. Its function is as follows. Cell wall formation. Adds enolpyruvyl to UDP-N-acetylglucosamine. The sequence is that of UDP-N-acetylglucosamine 1-carboxyvinyltransferase 1 from Lactiplantibacillus plantarum (strain ATCC BAA-793 / NCIMB 8826 / WCFS1) (Lactobacillus plantarum).